Reading from the N-terminus, the 239-residue chain is Large ribosomal subunit protein uL3 (239 aa).

Disordered stretches follow at residues 140-166 and 211-239; these read SHRS…PGHM and PLPK…QEGA. Residue Q151 is modified to N5-methylglutamine.

This sequence belongs to the universal ribosomal protein uL3 family. In terms of assembly, part of the 50S ribosomal subunit. Forms a cluster with proteins L14 and L19. In terms of processing, methylated by PrmB.

Functionally, one of the primary rRNA binding proteins, it binds directly near the 3'-end of the 23S rRNA, where it nucleates assembly of the 50S subunit. The polypeptide is Large ribosomal subunit protein uL3 (Bradyrhizobium sp. (strain BTAi1 / ATCC BAA-1182)).